Consider the following 241-residue polypeptide: Outer membrane protein A (241 aa).

5 beta stranded membrane passes run 1–8 (LTAKLSYP), 13–21 (LDIYTRLGG), 46–55 (PVFAGGVEYA), 60–67 (IATRLEYQ), and 86–94 (MLSVGVSYR). Tandem repeats lie at residues 105 to 106 (AP), 107 to 108 (AP), 109 to 110 (AP), and 111 to 112 (AP). The 4 X 2 AA tandem repeats of A-P stretch occupies residues 105–112 (APAPAPAP). The OmpA-like domain occupies 114–241 (VQTKHFTLKS…RRVEIEVKGV (128 aa)). An intrachain disulfide couples Cys-215 to Cys-227.

This sequence belongs to the outer membrane OOP (TC 1.B.6) superfamily. OmpA family. In terms of assembly, monomer and homodimer.

The protein resides in the cell outer membrane. With TolR probably plays a role in maintaining the position of the peptidoglycan cell wall in the periplasm. Acts as a porin with low permeability that allows slow penetration of small solutes; an internal gate slows down solute passage. In Shimwellia blattae (Escherichia blattae), this protein is Outer membrane protein A.